The primary structure comprises 258 residues: MLIVISPAKTLDYQSPLATKKFTQPEMLDKSQQLIEICRELTPAQISSLMGISDKLAGLNAARFSEWQPDFTPDNARQAILAFKGDVYTGMQAQDFSAADFDFAQQHLRMLSGLYGVLRPLDLMQPYRLEMGIKLANPGGKDLYSFWGDQITEKLNQALEQQGDNVLINLASDEYFKAVKPAKLAGSLIKPVFLDEKNGKYKIISFYAKKARGLMSRFIIQNKLTKPEQLVDFNLEGYEFDAGLSAKNELVFKRAEQF.

Belongs to the UPF0246 family.

This chain is UPF0246 protein YE0603, found in Yersinia enterocolitica serotype O:8 / biotype 1B (strain NCTC 13174 / 8081).